Here is a 100-residue protein sequence, read N- to C-terminus: ESAT-6-like protein EsxB (100 aa).

This sequence belongs to the WXG100 family. CFP-10 subfamily. In terms of assembly, forms a tight 1:1 complex with EsxA.

It is found in the secreted. A secreted protein that might play a role in virulence. Might serve as a chaperone to prevent uncontrolled membrane lysis by its partner EsxA. In Mycobacterium leprae (strain TN), this protein is ESAT-6-like protein EsxB (esxB).